The chain runs to 275 residues: T-cell ecto-ADP-ribosyltransferase 2 (275 aa).

Positions 1 to 20 (MPSNICKFFLTWWLIQQVTG) are cleaved as a signal peptide. Cystine bridges form between cysteine 41-cysteine 243 and cysteine 141-cysteine 193. The region spanning 61 to 238 (AKLKVAWEEA…IFLDSPKRKK (178 aa)) is the TR mART core domain. Residues tyrosine 98, arginine 146, and glutamine 164 each contribute to the NAD(+) site. Arginine 146 is an active-site residue. Residue serine 167 is part of the active site. Serine 202 contacts NAD(+). At arginine 204 the chain carries ADP-ribosylarginine; by autocatalysis. Glutamate 209 is an active-site residue. Serine 246 carries the GPI-anchor amidated serine lipid modification. A propeptide spans 247–275 (SAGARESCVSLFLVVLPSLLVQLLCLAEP) (removed in mature form).

This sequence belongs to the Arg-specific ADP-ribosyltransferase family. As to expression, postthymic T-cells.

The protein resides in the cell membrane. The catalysed reaction is L-arginyl-[protein] + NAD(+) = N(omega)-(ADP-D-ribosyl)-L-arginyl-[protein] + nicotinamide + H(+). The enzyme catalyses NAD(+) + H2O = ADP-D-ribose + nicotinamide + H(+). Has both NAD(+) glycohydrolase and ADP-ribosyltransferase activity (to a lesser extent). This Rattus norvegicus (Rat) protein is T-cell ecto-ADP-ribosyltransferase 2 (Art2b).